The chain runs to 81 residues: uncharacterized protein (81 aa).

This is an uncharacterized protein from Escherichia coli (strain K12).